The chain runs to 381 residues: Cytochrome b (381 aa).

4 consecutive transmembrane segments (helical) span residues 34–54 (FGSLLGLCLIIQIVTGLFLAM), 78–99 (WLIRNIHANGASLFFVCVYIHI), 114–134 (WNIGVILLFLLMATAFVGYVL), and 179–199 (FFAFHFLLPFLITALMVIHVL). The heme b site is built by H84 and H98. Positions 183 and 197 each coordinate heme b. An a ubiquinone-binding site is contributed by H202. 4 consecutive transmembrane segments (helical) span residues 227 to 247 (YKDALGFLTLLILLGALALFL), 289 to 309 (LGGVLALLFSILILLLVPLLH), 321 to 341 (LTQVFFWILVTNMLVLTWIGG), and 348 to 368 (FILIGQIASITYFSLFLIAMP).

Belongs to the cytochrome b family. As to quaternary structure, the cytochrome bc1 complex contains 3 respiratory subunits (MT-CYB, CYC1 and UQCRFS1), 2 core proteins (UQCRC1 and UQCRC2) and probably 6 low-molecular weight proteins. Heme b is required as a cofactor.

The protein resides in the mitochondrion inner membrane. Component of the ubiquinol-cytochrome c reductase complex (complex III or cytochrome b-c1 complex) that is part of the mitochondrial respiratory chain. The b-c1 complex mediates electron transfer from ubiquinol to cytochrome c. Contributes to the generation of a proton gradient across the mitochondrial membrane that is then used for ATP synthesis. The polypeptide is Cytochrome b (mt-cyb) (Isurus paucus (Longfin mako shark)).